The chain runs to 290 residues: 4-hydroxybenzoate octaprenyltransferase (290 aa).

Helical transmembrane passes span 23–43 (IGAL…TPGV), 46–66 (LWIL…GCVV), 99–119 (LFVV…TMTI), 141–161 (LPQV…FAAV), 163–183 (ESVP…AVAY), 213–233 (LIIG…GELN), 234–254 (GLGW…VYQQ), and 268–288 (AFMN…MSYW).

This sequence belongs to the UbiA prenyltransferase family. Mg(2+) is required as a cofactor.

The protein localises to the cell inner membrane. It carries out the reaction all-trans-octaprenyl diphosphate + 4-hydroxybenzoate = 4-hydroxy-3-(all-trans-octaprenyl)benzoate + diphosphate. Its pathway is cofactor biosynthesis; ubiquinone biosynthesis. Functionally, catalyzes the prenylation of para-hydroxybenzoate (PHB) with an all-trans polyprenyl group. Mediates the second step in the final reaction sequence of ubiquinone-8 (UQ-8) biosynthesis, which is the condensation of the polyisoprenoid side chain with PHB, generating the first membrane-bound Q intermediate 3-octaprenyl-4-hydroxybenzoate. The protein is 4-hydroxybenzoate octaprenyltransferase of Escherichia coli (strain UTI89 / UPEC).